The chain runs to 908 residues: Magnesium-transporting ATPase, P-type 1 (908 aa).

A compositionally biased stretch (basic and acidic residues) spans 1 to 20; the sequence is MTDMNIENRKLNRPASENDK. Positions 1-21 are disordered; that stretch reads MTDMNIENRKLNRPASENDKQ. The Cytoplasmic segment spans residues 1–80; it reads MTDMNIENRK…QVPPALIQLL (80 aa). A helical transmembrane segment spans residues 81–101; it reads QAFNNPFIYVLMALAGVSFIT. The Extracellular portion of the chain corresponds to 102–113; the sequence is DYWLPLRRGEET. Residues 114–134 traverse the membrane as a helical segment; the sequence is DLTGVLIILTMVSLSGLLRFW. Over 135 to 293 the chain is Cytoplasmic; it reads QEFRTNRAAQ…QTAFDRGVNS (159 aa). The helical transmembrane segment at 294–314 threads the bilayer; that stretch reads VSWLLIRFMLIMVPVVLLING. The Extracellular segment spans residues 315–323; that stretch reads FSKGDWVEA. The chain crosses the membrane as a helical span at residues 324–341; it reads SLFALAVAVGLTPEMLPM. Residue Glu-337 coordinates Mg(2+). At 342 to 704 the chain is on the cytoplasmic side; sequence IVSSNLAKGA…IKGRETFGNI (363 aa). The 4-aspartylphosphate intermediate role is filled by Asp-379. Asp-650, Asp-654, and Asn-718 together coordinate Mg(2+). Residues 705-724 traverse the membrane as a helical segment; the sequence is IKYLNMTASSNFGNVFSVLV. Residues 725–733 lie on the Extracellular side of the membrane; it reads ASAFIPFLP. Residues 734–753 form a helical membrane-spanning segment; it reads MLAIHLLIQNLMYDISQLSL. Asn-743 and Asp-747 together coordinate Mg(2+). At 754-775 the chain is on the cytoplasmic side; the sequence is PWDKMDKEFLRKPRKWDAKNIG. Residues 776 to 799 form a helical membrane-spanning segment; the sequence is RFMLWIGPTSSIFDITTFALMWYV. Topologically, residues 800 to 808 are extracellular; it reads FAANNVEAQ. Residues 809–827 traverse the membrane as a helical segment; the sequence is ALFQSGWFIEGLLSQTLVV. The Cytoplasmic segment spans residues 828–840; that stretch reads HMLRTQKIPFIQS. Residues 841–860 traverse the membrane as a helical segment; sequence RATLPVLLTTGLIMAIGIYI. The Extracellular segment spans residues 861–875; that stretch reads PFSPLGAMVGLEPLP. A helical membrane pass occupies residues 876-895; sequence LSYFPWLVATLLSYCLVAQG. Over 896-908 the chain is Cytoplasmic; it reads MKRFYIKRFGQWF.

It belongs to the cation transport ATPase (P-type) (TC 3.A.3) family. Type IIIB subfamily.

The protein localises to the cell inner membrane. It carries out the reaction Mg(2+)(out) + ATP + H2O = Mg(2+)(in) + ADP + phosphate + H(+). Mediates magnesium influx to the cytosol. The protein is Magnesium-transporting ATPase, P-type 1 (mgtB) of Salmonella typhimurium (strain LT2 / SGSC1412 / ATCC 700720).